The chain runs to 271 residues: Beta-lactamase (271 aa).

The active-site Acyl-ester intermediate is the Ser-46. 210 to 212 (KTG) contacts substrate.

The protein belongs to the class-A beta-lactamase family. Monomer.

The enzyme catalyses a beta-lactam + H2O = a substituted beta-amino acid. Hydrolyzes broad-spectrum beta-lactam antibiotics. Active against cephalosporins. This Proteus vulgaris protein is Beta-lactamase.